We begin with the raw amino-acid sequence, 111 residues long: uncharacterized protein (111 aa).

An HIT domain is found at 4–111; it reads IFERIIEGAV…LGGGLLGSIA (108 aa). Positions 96–100 match the Histidine triad motif motif; it reads HLHIH.

This is an uncharacterized protein from Chlamydia trachomatis serovar D (strain ATCC VR-885 / DSM 19411 / UW-3/Cx).